The sequence spans 471 residues: Pancreatic lipase-related protein 2 (471 aa).

An N-terminal signal peptide occupies residues 1 to 17; sequence MLPSWTIGLLLLATVRG. A disulfide bridge connects residues C21 and C27. N-linked (GlcNAc...) asparagine glycosylation is present at N71. Residues 93–105 are required for galactolipase activity; that stretch reads IHGFIDKGEDSWP. Residues C109 and C120 are joined by a disulfide bond. S171 serves as the catalytic Nucleophile. D195 functions as the Charge relay system in the catalytic mechanism. Residues E206, R209, D211, and D214 each contribute to the Ca(2+) site. C256 and C280 are oxidised to a cystine. The tract at residues 257–279 is required for galactolipase activity; the sequence is QKNTLSTIVDVDGIWEGIEDFAA. The active-site Charge relay system is H282. Intrachain disulfides connect C304–C317 and C320–C325. N355 is a glycosylation site (N-linked (GlcNAc...) asparagine). A PLAT domain is found at 359–471; it reads WRYRVSVTLA…ENILQTLNPC (113 aa). Cysteines 455 and 471 form a disulfide.

It belongs to the AB hydrolase superfamily. Lipase family.

The protein resides in the secreted. It localises to the zymogen granule membrane. It is found in the cell projection. The protein localises to the neuron projection. It carries out the reaction a triacylglycerol + H2O = a diacylglycerol + a fatty acid + H(+). The enzyme catalyses a 1,2-diacyl-3-O-(beta-D-galactosyl)-sn-glycerol + 2 H2O = 3-beta-D-galactosyl-sn-glycerol + 2 a fatty acid + 2 H(+). The catalysed reaction is 1,2,3-tri-(9Z-octadecenoyl)-glycerol + H2O = di-(9Z)-octadecenoylglycerol + (9Z)-octadecenoate + H(+). It catalyses the reaction di-(9Z)-octadecenoylglycerol + H2O = (9Z-octadecenoyl)-glycerol + (9Z)-octadecenoate + H(+). It carries out the reaction (9Z-octadecenoyl)-glycerol + H2O = glycerol + (9Z)-octadecenoate + H(+). The enzyme catalyses 1-(9Z-octadecenoyl)-glycerol + H2O = glycerol + (9Z)-octadecenoate + H(+). The catalysed reaction is 1,2,3-tripropanoylglycerol + H2O = dipropanoylglycerol + propanoate + H(+). It catalyses the reaction 1,2,3-tributanoylglycerol + H2O = dibutanoylglycerol + butanoate + H(+). It carries out the reaction 1,2,3-trioctanoylglycerol + H2O = dioctanoylglycerol + octanoate + H(+). The enzyme catalyses 1,2-didecanoylglycerol + H2O = decanoylglycerol + decanoate + H(+). The catalysed reaction is long chain 1,2-diacyl-3-O-beta-D-galactosyl-sn-glycerol + H2O = long chain acyl-3-O-beta-D-galactosyl-sn-glycerol + a fatty acid + H(+). It catalyses the reaction 1,2-dioctanoyl-3-O-beta-D-galactosyl-sn-glycerol + H2O = octanoyl-3-(beta-D-galactosyl)-sn-glycerol + octanoate + H(+). It carries out the reaction 1,2-didodecanoyl-3-beta-D-galactosyl-sn-glycerol + H2O = dodecanoyl-3-beta-D-galactosyl-sn-glycerol + dodecanoate + H(+). The enzyme catalyses 1-beta-D-galactosyl-2,3-didodecanoyl-sn-glycerol + H2O = 1-beta-D-galactosyl-dodecanoyl-sn-glycerol + dodecanoate + H(+). The catalysed reaction is a 1,2-diacyl-3-O-[alpha-D-galactosyl-(1-&gt;6)-beta-D-galactosyl]-sn-glycerol + H2O = acyl-3-O-[alpha-D-galactosyl-(1-&gt;6)-beta-D-galactosyl]-sn-glycerol + a fatty acid + H(+). It catalyses the reaction long chain 1,2-diacyl-3-O-[alpha-D-galactosyl-(1-&gt;6)-beta-D-galactosyl]-sn-glycerol + H2O = long chain acyl-3-O-[alpha-D-galactosyl-(1-&gt;6)-beta-D-galactosyl]-sn-glycerol + a fatty acid + H(+). It carries out the reaction 1,2-dioctanoyl-3-O-[alpha-D-galactosyl-(1-&gt;6)-beta-D-galactosyl]-sn-glycerol + H2O = octanoyl-3-O-[alpha-D-galactosyl-(1-&gt;6)-beta-D-galactosyl]-sn-glycerol + octanoate + H(+). The enzyme catalyses 1,2-didodecanoyl-3-O-[alpha-D-galactosyl-(1-&gt;6)-beta-D-galactosyl]-sn-glycerol + H2O = dodecanoyl-3-O-[alpha-D-galactosyl-(1-&gt;6)-beta-D-galactosyl]-sn-glycerol + dodecanoate + H(+). The catalysed reaction is a 1,2-diacyl-sn-glycero-3-phosphocholine + H2O = a monoacyl-sn-glycero-3-phosphocholine + a fatty acid + H(+). It participates in glycerolipid metabolism; triacylglycerol degradation. It functions in the pathway glycolipid metabolism. Its activity is regulated as follows. Up-regulated by CLPS in the presence of increasing concentrations of bile salts. In terms of biological role, lipase that primarily hydrolyzes triglycerides and galactosylglycerides. In neonates, may play a major role in pancreatic digestion of dietary fats such as milk fat globules enriched in long-chain triglycerides. Hydrolyzes short-, medium- and long-chain fatty acyls in triglycerides without apparent positional specificity. Can completely deacylate triacylglycerols. When the liver matures and bile salt synthesis increases, likely functions mainly as a galactolipase and monoacylglycerol lipase. Hydrolyzes monogalactosyldiglycerols (MGDG) and digalactosyldiacylglycerols (DGDG) present in a plant-based diet, releasing long-chain polyunsaturated fatty acids. Hydrolyzes medium- and long-chain fatty acyls in galactolipids. May act together with LIPF to hydrolyze partially digested triglycerides. Hydrolyzes long-chain monoglycerides with high efficiency. In cytotoxic T cells, contributes to perforin-dependent cell lysis, but is unlikely to mediate direct cytotoxicity. Also has low phospholipase activity. In neurons, required for the localization of the phospholipid 1-oleoyl-2-palmitoyl-PC (OPPC) to neurite tips through acyl chain remodeling of membrane phospholipids. The resulting OPPC-rich lipid membrane domain recruits the t-SNARE protein STX4 by selectively interacting with the STX4 transmembrane domain and this promotes surface expression of the dopamine transporter SLC6A3/DAT at neurite tips by facilitating fusion of SLC6A3-containing transport vesicles with the plasma membrane. The chain is Pancreatic lipase-related protein 2 (PNLIPRP2) from Sus scrofa (Pig).